The chain runs to 360 residues: Serine/threonine-protein kinase SAPK4 (360 aa).

Positions 4–260 (YEAVRDIGSG…MKEIKSHPWF (257 aa)) constitute a Protein kinase domain. ATP-binding positions include 10 to 18 (IGSGNFGVA) and lysine 33. Aspartate 123 (proton acceptor) is an active-site residue. Residues 303 to 360 (TMPKSSRTGYWSDAGSDEEEKEEEERPEENEEEEEDEYDKRVKEVHASGELRMSSLRI) are disordered. Residues 317–339 (GSDEEEKEEEERPEENEEEEEDE) show a composition bias toward acidic residues. The span at 340-351 (YDKRVKEVHASG) shows a compositional bias: basic and acidic residues.

The protein belongs to the protein kinase superfamily. Ser/Thr protein kinase family. In terms of processing, may be phosphorylated. Expressed in leaf blades, leaf sheaths and roots. Expressed in shoots and roots of young seedlings.

It carries out the reaction L-seryl-[protein] + ATP = O-phospho-L-seryl-[protein] + ADP + H(+). It catalyses the reaction L-threonyl-[protein] + ATP = O-phospho-L-threonyl-[protein] + ADP + H(+). With respect to regulation, activated by hyperosmotic stress. Functionally, may play a role in signal transduction of hyperosmotic response. The protein is Serine/threonine-protein kinase SAPK4 (SAPK4) of Oryza sativa subsp. japonica (Rice).